Here is a 122-residue protein sequence, read N- to C-terminus: uncharacterized protein (122 aa).

Residues 1–20 (MGFHFCIWIIFLLPPPCKKC) form the signal peptide.

The protein resides in the secreted. This is an uncharacterized protein from Homo sapiens (Human).